Reading from the N-terminus, the 343-residue chain is Fructose-1,6-bisphosphatase, cytosolic (343 aa).

Residues Glu71, Glu100, Asp121, Leu123, and Asp124 each contribute to the Mg(2+) site. Residues 124–127 (DGSS), Asn215, Tyr247, Tyr267, and Lys277 each bind substrate. Mg(2+) is bound at residue Glu283.

This sequence belongs to the FBPase class 1 family. Mg(2+) is required as a cofactor.

It is found in the cytoplasm. The catalysed reaction is beta-D-fructose 1,6-bisphosphate + H2O = beta-D-fructose 6-phosphate + phosphate. In Saccharum hybrid (Sugarcane), this protein is Fructose-1,6-bisphosphatase, cytosolic (CFBP).